A 608-amino-acid polypeptide reads, in one-letter code: MLEIGSPNALFFRTNTTCNNLLRELQKIWVEIGETETEKDRMLMELERECLQIYQRKVDEAANSKAKLHQSVASIEAEVASLMAALGVLNINSPIKLDKGSKSLKEKLAAVTPLVEELRIQKEERMKQFSDIKAQIEKISGEISGYSDHLNKAMNISLTLEEQDLTLRNLNEYQTHLRTLQKEKSDRLNKVLGYVNEVHALCGVLGVDFSQTVSAVHPSLHRTDQEQSTNISDSTLEGLEHMIQKLKTERKSRFQKLKDVVASLFELWNLMDTPQEDRTKFGKVTYVVRSSEANITEPGILSTETIEQVSTEVDSLSKLKASRMKELVMKRRSELEDLCRLTHIQPDTSTSAEKSTALIDSGLVDPSELLANIEMQINKIKDEAQSRKDIMDRIDRWLSACEEENWLEEYNLDENRYSAGRGGHVNLKRAERARVTINKIPGMVDTLIKKTLVWEEDMQKSFLYDGVRLVNILEDYKLTRKQQEEEKKRYRDQKKRQDLLLTQRESIYGSKPSPRRSSSFRKPNGFNISNGNGSVPPTPRRGSVGTTTPDVLLTPRSYSGHHRQNGYFKEVRRLSTTPLNYVAMQKEDTVSTTYTSIYSSEPDSPLQG.

Coiled coils occupy residues Asp164–Asp186, Glu368–Lys388, and Val467–Gln503. The interval Leu501 to Asn565 is disordered. The span at Ser510–Pro523 shows a compositional bias: low complexity. Ser513 carries the phosphoserine modification. Positions Phe526–Val535 are enriched in polar residues. Ser604 is modified (phosphoserine).

It belongs to the MAP65/ASE1 family. Forms a dimer. Binds to polymerized centrally located endocytic MT.

The protein localises to the nucleus. Its subcellular location is the cytoplasm. The protein resides in the mitochondrion. It is found in the cytoskeleton. It localises to the phragmoplast. Functionally, microtubule-associated protein that mediates the formation of a mesh-like stable and dense network formed by individual microtubules (MT). Confers MT resistance to high concentration of NaCl. The polypeptide is 65-kDa microtubule-associated protein 6 (MAP65-6) (Arabidopsis thaliana (Mouse-ear cress)).